The sequence spans 123 residues: Ribonuclease P protein component 2 (123 aa).

It belongs to the eukaryotic/archaeal RNase P protein component 2 family. In terms of assembly, consists of a catalytic RNA component and at least 4-5 protein subunits.

It localises to the cytoplasm. It carries out the reaction Endonucleolytic cleavage of RNA, removing 5'-extranucleotides from tRNA precursor.. Its function is as follows. Part of ribonuclease P, a protein complex that generates mature tRNA molecules by cleaving their 5'-ends. The protein is Ribonuclease P protein component 2 of Sulfurisphaera tokodaii (strain DSM 16993 / JCM 10545 / NBRC 100140 / 7) (Sulfolobus tokodaii).